A 272-amino-acid polypeptide reads, in one-letter code: Ribosomal RNA small subunit methyltransferase A (272 aa).

The S-adenosyl-L-methionine site is built by His11, Leu13, Gly38, Glu59, Asp84, and Asn109.

This sequence belongs to the class I-like SAM-binding methyltransferase superfamily. rRNA adenine N(6)-methyltransferase family. RsmA subfamily.

Its subcellular location is the cytoplasm. The catalysed reaction is adenosine(1518)/adenosine(1519) in 16S rRNA + 4 S-adenosyl-L-methionine = N(6)-dimethyladenosine(1518)/N(6)-dimethyladenosine(1519) in 16S rRNA + 4 S-adenosyl-L-homocysteine + 4 H(+). Specifically dimethylates two adjacent adenosines (A1518 and A1519) in the loop of a conserved hairpin near the 3'-end of 16S rRNA in the 30S particle. May play a critical role in biogenesis of 30S subunits. This is Ribosomal RNA small subunit methyltransferase A from Rippkaea orientalis (strain PCC 8801 / RF-1) (Cyanothece sp. (strain PCC 8801)).